We begin with the raw amino-acid sequence, 87 residues long: Small ribosomal subunit protein uS15 (87 aa).

Belongs to the universal ribosomal protein uS15 family. Part of the 30S ribosomal subunit. Forms a bridge to the 50S subunit in the 70S ribosome, contacting the 23S rRNA.

Functionally, one of the primary rRNA binding proteins, it binds directly to 16S rRNA where it helps nucleate assembly of the platform of the 30S subunit by binding and bridging several RNA helices of the 16S rRNA. Its function is as follows. Forms an intersubunit bridge (bridge B4) with the 23S rRNA of the 50S subunit in the ribosome. The chain is Small ribosomal subunit protein uS15 from Clostridium beijerinckii (strain ATCC 51743 / NCIMB 8052) (Clostridium acetobutylicum).